The following is a 103-amino-acid chain: Large ribosomal subunit protein bL21 (103 aa).

The protein belongs to the bacterial ribosomal protein bL21 family. Part of the 50S ribosomal subunit. Contacts protein L20.

Functionally, this protein binds to 23S rRNA in the presence of protein L20. In Shewanella woodyi (strain ATCC 51908 / MS32), this protein is Large ribosomal subunit protein bL21.